The chain runs to 339 residues: GTPase Obg (339 aa).

In terms of domain architecture, Obg spans 1-159; the sequence is MKFVDEAFVR…RELKLELKLL (159 aa). The OBG-type G domain maps to 160 to 333; the sequence is ADVGLLGLPN…LCYDLMSFLE (174 aa). Residues 166–173, 191–195, 213–216, 283–286, and 314–316 each bind GTP; these read GLPNAGKS, FTTLY, DIPG, NKID, and SAI. Mg(2+)-binding residues include Ser173 and Thr193.

This sequence belongs to the TRAFAC class OBG-HflX-like GTPase superfamily. OBG GTPase family. As to quaternary structure, monomer. The cofactor is Mg(2+).

It is found in the cytoplasm. In terms of biological role, an essential GTPase which binds GTP, GDP and possibly (p)ppGpp with moderate affinity, with high nucleotide exchange rates and a fairly low GTP hydrolysis rate. Plays a role in control of the cell cycle, stress response, ribosome biogenesis and in those bacteria that undergo differentiation, in morphogenesis control. This chain is GTPase Obg, found in Coxiella burnetii (strain RSA 331 / Henzerling II).